The chain runs to 365 residues: 5-hydroxytryptamine receptor 1E (365 aa).

Over 1 to 22 (MNITNCTTDASMVVRPKTVTEK) the chain is Extracellular. 2 N-linked (GlcNAc...) asparagine glycosylation sites follow: asparagine 2 and asparagine 5. Residues 23 to 47 (MLICMTLVIITTLTMLLNSAVIMAI) form a helical membrane-spanning segment. The Cytoplasmic portion of the chain corresponds to 48–59 (CTTKKLHQPANY). Residues 60 to 82 (LICSLAVTDLLVAVLVMPLSIMY) traverse the membrane as a helical segment. Residues 83–96 (IVMDSWRLGYFICE) lie on the Extracellular side of the membrane. Cysteines 95 and 173 form a disulfide. The helical transmembrane segment at 97-118 (VWLSVDMTCCTCSILHLCVIAL) threads the bilayer. Aspartate 102 and threonine 107 together coordinate ergotamine. Positions 119–121 (DRY) match the DRY motif; important for ligand-induced conformation changes motif. Over 119–138 (DRYWAITNAIEYARKRTAKR) the chain is Cytoplasmic. The chain crosses the membrane as a helical span at residues 139–160 (AGLMILTVWTISIFISMPPLFW). The Extracellular segment spans residues 161-179 (RSHRQLSPPPSQCTIQHDH). Ergotamine is bound at residue isoleucine 175. A helical transmembrane segment spans residues 180–202 (VIYTIYSTFGAFYIPLTLILILY). Over 203–291 (YRIYHAAKSL…SSTRERKAAR (89 aa)) the chain is Cytoplasmic. Residues 292–314 (ILGLILGAFILSWLPFFIKELIV) traverse the membrane as a helical segment. The Extracellular portion of the chain corresponds to 315–324 (GLSIYTVSSE). Residues 325–347 (VGDFLTWLGYVNSLINPLLYTSF) traverse the membrane as a helical segment. An NPxxY motif; important for ligand-induced conformation changes and signaling motif is present at residues 340–344 (NPLLY). The Cytoplasmic segment spans residues 348–365 (NEDFKLAFKKLIRCREHT).

It belongs to the G-protein coupled receptor 1 family. As to expression, detected in the brain with the greatest abundance in the hippocampus, followed by the olfactory bulb. Lower levels are detected in the cortex, thalamus, pons, hypothalamus, midbrain, striatum, and cerebellum.

It is found in the cell membrane. In terms of biological role, G-protein coupled receptor for 5-hydroxytryptamine (serotonin). Also functions as a receptor for various alkaloids and psychoactive substances. Ligand binding causes a conformation change that triggers signaling via guanine nucleotide-binding proteins (G proteins) and modulates the activity of down-stream effectors, such as adenylate cyclase. Signaling inhibits adenylate cyclase activity. The polypeptide is 5-hydroxytryptamine receptor 1E (5HT1E) (Cavia porcellus (Guinea pig)).